The sequence spans 406 residues: Arginine decarboxylase (406 aa).

K8 carries the N6-(pyridoxal phosphate)lysine modification. 192 to 202 (VDFGGGLGIDY) contributes to the substrate binding site.

It belongs to the Orn/Lys/Arg decarboxylase class-II family. SpeA subfamily. Pyridoxal 5'-phosphate is required as a cofactor. Requires Mg(2+) as cofactor.

It carries out the reaction L-arginine + H(+) = agmatine + CO2. The protein operates within amine and polyamine biosynthesis; agmatine biosynthesis; agmatine from L-arginine: step 1/1. The polypeptide is Arginine decarboxylase (SPE2) (Theobroma cacao (Cacao)).